Here is a 274-residue protein sequence, read N- to C-terminus: 2,3,4,5-tetrahydropyridine-2,6-dicarboxylate N-succinyltransferase (274 aa).

R104 and D141 together coordinate substrate.

Belongs to the transferase hexapeptide repeat family. Homotrimer.

It is found in the cytoplasm. It carries out the reaction (S)-2,3,4,5-tetrahydrodipicolinate + succinyl-CoA + H2O = (S)-2-succinylamino-6-oxoheptanedioate + CoA. It functions in the pathway amino-acid biosynthesis; L-lysine biosynthesis via DAP pathway; LL-2,6-diaminopimelate from (S)-tetrahydrodipicolinate (succinylase route): step 1/3. The sequence is that of 2,3,4,5-tetrahydropyridine-2,6-dicarboxylate N-succinyltransferase from Idiomarina loihiensis (strain ATCC BAA-735 / DSM 15497 / L2-TR).